We begin with the raw amino-acid sequence, 120 residues long: Reprimo-like protein (120 aa).

The chain crosses the membrane as a helical span at residues 67–87 (VAQIAVLCVLSLTVVFGVFFL). Ser109 is modified (phosphoserine).

This sequence belongs to the reprimo family.

It localises to the membrane. This Homo sapiens (Human) protein is Reprimo-like protein (RPRML).